A 48-amino-acid polypeptide reads, in one-letter code: uncharacterized protein (48 aa).

This is an uncharacterized protein from Methanocaldococcus jannaschii (strain ATCC 43067 / DSM 2661 / JAL-1 / JCM 10045 / NBRC 100440) (Methanococcus jannaschii).